The sequence spans 305 residues: HPr kinase/phosphorylase (305 aa).

Catalysis depends on residues His-138 and Lys-159. Position 153-160 (153-160 (GESGIGKS)) interacts with ATP. Ser-160 contacts Mg(2+). Asp-177 functions as the Proton acceptor; for phosphorylation activity. Proton donor; for dephosphorylation activity in the catalytic mechanism. The interval 201–210 (IEIRGIGILD) is important for the catalytic mechanism of both phosphorylation and dephosphorylation. Glu-202 is a Mg(2+) binding site. Arg-243 is an active-site residue. Residues 264–269 (PVRPGR) are important for the catalytic mechanism of dephosphorylation.

This sequence belongs to the HPrK/P family. Homohexamer. Requires Mg(2+) as cofactor.

It carries out the reaction [HPr protein]-L-serine + ATP = [HPr protein]-O-phospho-L-serine + ADP + H(+). The enzyme catalyses [HPr protein]-O-phospho-L-serine + phosphate + H(+) = [HPr protein]-L-serine + diphosphate. In terms of biological role, catalyzes the ATP- as well as the pyrophosphate-dependent phosphorylation of a specific serine residue in HPr, a phosphocarrier protein of the phosphoenolpyruvate-dependent sugar phosphotransferase system (PTS). HprK/P also catalyzes the pyrophosphate-producing, inorganic phosphate-dependent dephosphorylation (phosphorolysis) of seryl-phosphorylated HPr (P-Ser-HPr). The two antagonistic activities of HprK/P are regulated by several intracellular metabolites, which change their concentration in response to the absence or presence of rapidly metabolisable carbon sources (glucose, fructose, etc.) in the growth medium. Therefore, by controlling the phosphorylation state of HPr, HPrK/P is a sensor enzyme that plays a major role in the regulation of carbon metabolism and sugar transport: it mediates carbon catabolite repression (CCR), and regulates PTS-catalyzed carbohydrate uptake and inducer exclusion. This is HPr kinase/phosphorylase from Thermoanaerobacter pseudethanolicus (strain ATCC 33223 / 39E) (Clostridium thermohydrosulfuricum).